The primary structure comprises 901 residues: MDETHENEASDSFDPVFENSYHDDVTFNTEDDDEPPLEPRFKYERLKGEETLPFMKTATFTSIDLHDKFIAIGTATGLIYILDHHGYGNFDSVPPLKPHRCAVSKVKFDETGSYVLSCANDSKIVVSGVGNDKLCCTINIQVMPKSIYFSPDFIRQQSGHCFIMGERNLVLYEKRMFQYKASSLYSGSERDGFIHCCSWNENLIAFTNDTGTRVYERGAERIITSVQPSHDVDRVRSSRSPPKHTWMPENNLVIGWADTVTILKIRDDDGVKKGEVHHIFHVSMFICGISYIPESGIDNMELFLVGLQLEGEDFDDCASVISTVTTLTALESSACTILKTSVIRPLGLKEFELQSEDMIESVKLSNHTLPYMIHGLGIPYLATYFILTTKHIIMAVPYGPEDGIRWRLKYKLYDEALDMAKHNADLLSKTDLSPKKVGRMIIEGYLTGKRARAAASRLPLICGECKEEWEWAVNQFEEVKLCTLLAEVLPDGTPTLDPECYQKVLIACLFNNVKQFRKLVQTWSPDLYMTSFIIDRTQWRIQQISKSGNLADVDETERVLMDALAHLYLYERKYESALKILMSCQDFQIFNVIDKHQLFDLVKDQITELMNINSERALRLLLDNADSVEPSFVMEKIGRQPKLQLAYLTKLMSRNEGTEFADKAVQLYAEYDQKKLLPFLRKNANYNVNKARKLCSDKGYIEETIYLLAKSGNHYDAVKMMVREYRNMEKVIDYCKDQNDPDLWIHLLGVVAEFPAHFSQLIIEASNCLDPLLIMDKLPDDSDIPNLSEALDKLLVDYTNHAELQQCCYDSTLNDLNVLTQGLISAADESVSVNIVSRCSLCAQIIINSNQETTKKFSDIKVFKCGHIFHLACSTSEMERRQSIEEGLCIACSDQIELINV.

Residues 1–37 (MDETHENEASDSFDPVFENSYHDDVTFNTEDDDEPPL) are disordered. A CHCR repeat occupies 618–760 (LRLLLDNADS…VAEFPAHFSQ (143 aa)). The RING-type; atypical zinc finger occupies 839–893 (CSLCAQIIINSNQETTKKFSDIKVFKCGHIFHLACSTSEMERRQSIEEGLCIACS).

This sequence belongs to the VPS41 family. Probable component of the homotypic fusion and vacuole protein sorting (HOPS) complex consisting of the core class C Vps proteins vps-11, vps-16, vps-18, and which further associates with vps-33.1, vps-39 and vps-41.

It localises to the endosome membrane. Its subcellular location is the late endosome membrane. The protein resides in the early endosome membrane. It is found in the lysosome membrane. The protein localises to the golgi apparatus. It localises to the trans-Golgi network. Its subcellular location is the cytoplasmic vesicle. The protein resides in the clathrin-coated vesicle. It is found in the cytoplasm. The protein localises to the cytosol. Plays a role in vesicle-mediated protein trafficking to lysosomal compartments including the endocytic membrane transport pathways. Believed to act in part as a core component of the putative HOPS endosomal tethering complex which is proposed to be involved in the rab-5-to-rab-7 endosome conversion probably implicating sand-1, and via binding SNAREs and SNARE complexes to mediate tethering and docking events during SNARE-mediated membrane fusion. The HOPS complex is proposed to be recruited to rab-7 on the late endosomal membrane and to regulate late endocytic, phagocytic and autophagic traffic towards lysosomes. Within the HOPS complex, contributes to the normal development of gut granules in the adult intestine. May mediate the tethering of autophagosomes with lysosomes. Has a role in the negative regulation of apoptosis. Required for uptake of exogenous dsRNA which is used in experimental RNA silencing. This is Vacuolar protein sorting-associated protein 41 homolog from Caenorhabditis elegans.